The chain runs to 363 residues: Mitogen-activated protein kinase kinase 2 (363 aa).

S56 bears the Phosphoserine mark. Residues 70-330 form the Protein kinase domain; it reads LDMVKVIGKG…AKELMEHPFL (261 aa). Residues 76-84 and K99 each bind ATP; that span reads IGKGSSGVV. D192 acts as the Proton acceptor in catalysis. 3 positions are modified to phosphothreonine: T220, T226, and T230.

It belongs to the protein kinase superfamily. STE Ser/Thr protein kinase family. MAP kinase kinase subfamily. Interacts with MEKK1, MPK4 and MPK6. May form a ternary complex composed of MEKK1 and MKK1/MKK2 and MPK4. Interacts with MPK10 and MPK11. Interacts with MAPKKK5 mainly in the cytosol. Post-translationally, phosphorylation at Thr-220 and Thr-226 by MAP kinase kinase kinases positively regulates kinase activity. Phosphorylated by MEKK1 in response to cold. Phosphorylated by MAPKKK5.

The enzyme catalyses L-seryl-[protein] + ATP = O-phospho-L-seryl-[protein] + ADP + H(+). It carries out the reaction L-threonyl-[protein] + ATP = O-phospho-L-threonyl-[protein] + ADP + H(+). The catalysed reaction is L-tyrosyl-[protein] + ATP = O-phospho-L-tyrosyl-[protein] + ADP + H(+). With respect to regulation, activated in response to cold and salt stresses through serine and threonine phosphorylation by MEKK1. Functionally, MEKK1, MKK1/MKK2 and MPK4 function in a signaling pathway that modulates the expression of genes responding to biotic and abiotic stresses and also plays an important role in pathogen defense by negatively regulating innate immunity. Plays a role in abiotic stress tolerance and plant disease resistance through activation of MPK4 and MPK6 by phosphorylation. Acts redundantly with MKK1. The polypeptide is Mitogen-activated protein kinase kinase 2 (MKK2) (Arabidopsis thaliana (Mouse-ear cress)).